Here is a 66-residue protein sequence, read N- to C-terminus: Gas vesicle protein A (66 aa).

Belongs to the gas vesicle GvpA family. In terms of assembly, the gas vesicle shell is 2 nm thick and consists of a single layer of this protein. It forms helical ribs nearly perpendicular to the long axis of the vesicle.

Its subcellular location is the gas vesicle shell. Functionally, gas vesicles are hollow, gas filled proteinaceous nanostructures found in some microorganisms. During planktonic growth they allow positioning of the organism at a favorable depth for light or nutrient acquisition. GvpA forms the protein shell. The polypeptide is Gas vesicle protein A (Thiocapsa pendens (Amoebobacter pendens)).